Reading from the N-terminus, the 306-residue chain is Latrophilin receptor-like protein A (306 aa).

Over 1–15 the chain is Extracellular; the sequence is MPSQLLNTVLSYLTD. Residues 16–36 traverse the membrane as a helical segment; it reads ILLSLSIVGSFLTIFTFMLYP. At 37–41 the chain is on the cytoplasmic side; that stretch reads KLRSY. Residues 42 to 62 form a helical membrane-spanning segment; the sequence is PIKLIIYLCMSIVFSLFFFEI. The Extracellular portion of the chain corresponds to 63–70; the sequence is SFRSSNSL. A helical membrane pass occupies residues 71-91; it reads FCIPAAILVHYFFLANFFWTF. The Cytoplasmic segment spans residues 92–113; it reads SVSFNFFQMIVKRNRDSEFYER. Residues 114-134 traverse the membrane as a helical segment; the sequence is YYHLISWGIPFIIIIFCAAFK. At 135 to 152 the chain is on the extracellular side; sequence KYVDRGGFCYLEDQYSVY. A helical transmembrane segment spans residues 153 to 173; sequence FGFFMPGVIIVCSNICIYVFV. The Cytoplasmic portion of the chain corresponds to 174–196; that stretch reads AKEIYKTLRHTPTQKRQTVKEFR. The helical transmembrane segment at 197 to 217 threads the bilayer; the sequence is VYFSIFVSIGSSWIFGFIYMF. Residues 218-222 are Extracellular-facing; the sequence is SDSNS. Residues 223-243 traverse the membrane as a helical segment; the sequence is IIGYIFLILFSISTSLQGFFI. Over 244–306 the chain is Cytoplasmic; the sequence is FISYCLNYKV…TTTTTNVYSA (63 aa). The disordered stretch occupies residues 279-306; that stretch reads TTQSGPTGTTDSSSTMTSTTTTTNVYSA.

Belongs to the G-protein coupled receptor 2 family. LN-TM7 subfamily.

The protein resides in the membrane. The protein is Latrophilin receptor-like protein A (lrlA) of Dictyostelium discoideum (Social amoeba).